The chain runs to 356 residues: MAIDENKQKALAAALGQIEKQFGKGSIMRLGEDRSMDVETISTGSLSLDIALGAGGLPMGRIVEIYGPESSGKTTLTLQVIAAAQREGKTCAFIDAEHALDPIYAKKLGVDIDNLLCSQPDTGEQALEICDALTRSGAVDVIIVDSVAALTPKAEIEGEIGDSHMGLAARMMSQAMRKLAGNLKNANTLLIFINQIRMKIGVMFGNPETTTGGNALKFYASVRLDIRRIGAVKDGDVVVGSETRVKVVKNKIAAPFKQAEFQILYGEGININGELVDLGVKHKLIEKAGAWYSYNGDKIGQGKANASNYLKENPAIAAELDKKLREMLLNGGNGEQPVAAATAEFADGADETNEEF.

67 to 74 (GPESSGKT) provides a ligand contact to ATP.

Belongs to the RecA family.

The protein localises to the cytoplasm. In terms of biological role, can catalyze the hydrolysis of ATP in the presence of single-stranded DNA, the ATP-dependent uptake of single-stranded DNA by duplex DNA, and the ATP-dependent hybridization of homologous single-stranded DNAs. It interacts with LexA causing its activation and leading to its autocatalytic cleavage. This Yersinia pestis bv. Antiqua (strain Angola) protein is Protein RecA.